The primary structure comprises 745 residues: Pentatricopeptide repeat-containing protein At1g71420 (745 aa).

PPR repeat units follow at residues 58–88 (SQQA…MLSH), 95–125 (NVIL…MPER), 126–160 (NVVS…CFPN), 191–224 (SIYV…IKFK), 225–259 (NLVT…GVGF), 260–296 (DRAT…TVKS), 301–332 (QTEV…MSHC), 334–367 (DIVA…KLSP), 368–402 (DWYT…GFLA), 403–437 (DTVL…DVVS), 438–464 (WNSM…MDIN), 466–496 (DSAT…MFEK), and 502–532 (QLNH…MPMD). Positions 537-613 (VWIALLGSCR…EPDLSWTEIG (77 aa)) are type E motif. The type E(+) motif stretch occupies residues 614-644 (NKVHEFASGGRHRPDKEAVYRELKRLISWLK). The type DYW motif stretch occupies residues 645–745 (EMGYVPEMRS…DSSCSCNDYW (101 aa)).

Belongs to the PPR family. PCMP-H subfamily.

The polypeptide is Pentatricopeptide repeat-containing protein At1g71420 (PCMP-H70) (Arabidopsis thaliana (Mouse-ear cress)).